The following is a 265-amino-acid chain: Diphthine synthase (265 aa).

S-adenosyl-L-methionine is bound by residues Leu10, Asp87, Val90, 115–116 (SI), Leu166, Ala209, and His234.

It belongs to the diphthine synthase family. Homodimer.

The enzyme catalyses 2-[(3S)-amino-3-carboxypropyl]-L-histidyl-[translation elongation factor 2] + 3 S-adenosyl-L-methionine = diphthine-[translation elongation factor 2] + 3 S-adenosyl-L-homocysteine + 3 H(+). The protein operates within protein modification; peptidyl-diphthamide biosynthesis. S-adenosyl-L-methionine-dependent methyltransferase that catalyzes the trimethylation of the amino group of the modified target histidine residue in translation elongation factor 2 (EF-2), to form an intermediate called diphthine. The three successive methylation reactions represent the second step of diphthamide biosynthesis. This is Diphthine synthase from Pyrococcus horikoshii (strain ATCC 700860 / DSM 12428 / JCM 9974 / NBRC 100139 / OT-3).